We begin with the raw amino-acid sequence, 903 residues long: Immunoglobulin superfamily member 22 (903 aa).

Ig-like domains lie at 67–158, 232–322, 418–508, and 606–696; these read PEFV…LLVT, EAIR…AELT, PIKF…AIVT, and PSVL…LHLS. Fibronectin type-III domains lie at 703–798 and 804–898; these read FASQ…AKDP and LVQD…MPPP.

In Homo sapiens (Human), this protein is Immunoglobulin superfamily member 22 (IGSF22).